The following is a 96-amino-acid chain: Large ribosomal subunit protein uL23 (96 aa).

This sequence belongs to the universal ribosomal protein uL23 family. In terms of assembly, part of the 50S ribosomal subunit. Contacts protein L29, and trigger factor when it is bound to the ribosome.

One of the early assembly proteins it binds 23S rRNA. One of the proteins that surrounds the polypeptide exit tunnel on the outside of the ribosome. Forms the main docking site for trigger factor binding to the ribosome. The protein is Large ribosomal subunit protein uL23 of Thermus thermophilus (strain ATCC BAA-163 / DSM 7039 / HB27).